Reading from the N-terminus, the 395-residue chain is MAKEKFNRTKVHMNVGTIGHVDHGKTTLSAAITTYCAKKYGDKLLKYDEIDNAPEEKERGITINTRHLEYQSDKRHYAHIDCPGHADYVKNMITGAAQMDGAILVVSAPDSVMPQTKEHLLLARQVGVPSIIVFLNKVDLVDDPELVELVEEEVRETLTSYGFPEDTPIIKGSAFKALQEGATAEDTACIEELLKTMDEYFKDPVRDSDKPFLLPIEDIFTIQGRGTVVTGRIERGVIKMNEEVEIVGIKPTKKTVVTGIEMFNKLLDEGEAGDNVGLLLRGIEKKEVERGQVLAKPGSIHPHTKFEAQIYVLSKEEGGRHSPFFSGYRPQFYFRTTDITGTVNLPEGTDMVKPGDNTKIIGELIHPIAMDQGLKLAIREGGRTIASGQVTNIIE.

Residues 10-205 form the tr-type G domain; the sequence is KVHMNVGTIG…TMDEYFKDPV (196 aa). A G1 region spans residues 19-26; that stretch reads GHVDHGKT. GTP is bound at residue 19 to 26; it reads GHVDHGKT. Thr26 provides a ligand contact to Mg(2+). The interval 60–64 is G2; sequence GITIN. The segment at 81 to 84 is G3; the sequence is DCPG. Residues 81–85 and 136–139 each bind GTP; these read DCPGH and NKVD. The G4 stretch occupies residues 136–139; sequence NKVD. The segment at 173-175 is G5; sequence SAF.

It belongs to the TRAFAC class translation factor GTPase superfamily. Classic translation factor GTPase family. EF-Tu/EF-1A subfamily. Monomer.

The protein resides in the cytoplasm. The catalysed reaction is GTP + H2O = GDP + phosphate + H(+). In terms of biological role, GTP hydrolase that promotes the GTP-dependent binding of aminoacyl-tRNA to the A-site of ribosomes during protein biosynthesis. This is Elongation factor Tu from Treponema denticola (strain ATCC 35405 / DSM 14222 / CIP 103919 / JCM 8153 / KCTC 15104).